A 423-amino-acid chain; its full sequence is UPF0229 protein Psyr_4632 (423 aa).

Residues 65–110 (HHGRGGKQTVVHPGNKEFTTGEHIARPQGGGGGKGPGKAGNSGEGM) are disordered. The span at 92–107 (QGGGGGKGPGKAGNSG) shows a compositional bias: gly residues.

It belongs to the UPF0229 family.

The polypeptide is UPF0229 protein Psyr_4632 (Pseudomonas syringae pv. syringae (strain B728a)).